We begin with the raw amino-acid sequence, 152 residues long: Nucleoside diphosphate kinase (152 aa).

ATP contacts are provided by Lys9, Phe57, Arg85, Thr91, Arg102, and Asn112. The active-site Pros-phosphohistidine intermediate is His115.

This sequence belongs to the NDK family. Homotetramer. Requires Mg(2+) as cofactor.

It is found in the cytoplasm. The catalysed reaction is a 2'-deoxyribonucleoside 5'-diphosphate + ATP = a 2'-deoxyribonucleoside 5'-triphosphate + ADP. It carries out the reaction a ribonucleoside 5'-diphosphate + ATP = a ribonucleoside 5'-triphosphate + ADP. In terms of biological role, major role in the synthesis of nucleoside triphosphates other than ATP. The ATP gamma phosphate is transferred to the NDP beta phosphate via a ping-pong mechanism, using a phosphorylated active-site intermediate. The sequence is that of Nucleoside diphosphate kinase from Rhodopirellula baltica (strain DSM 10527 / NCIMB 13988 / SH1).